Reading from the N-terminus, the 195-residue chain is Imidazoleglycerol-phosphate dehydratase (195 aa).

The protein belongs to the imidazoleglycerol-phosphate dehydratase family.

The protein localises to the cytoplasm. The catalysed reaction is D-erythro-1-(imidazol-4-yl)glycerol 3-phosphate = 3-(imidazol-4-yl)-2-oxopropyl phosphate + H2O. Its pathway is amino-acid biosynthesis; L-histidine biosynthesis; L-histidine from 5-phospho-alpha-D-ribose 1-diphosphate: step 6/9. The sequence is that of Imidazoleglycerol-phosphate dehydratase from Geobacter sp. (strain M21).